Here is a 496-residue protein sequence, read N- to C-terminus: E3 ubiquitin-protein ligase Hakai (496 aa).

The interval 35 to 60 is disordered; the sequence is PNKIKPAPRPQRNMNRIPTKPQPGFD. Residues 104-144 form an RING-type; degenerate zinc finger; that stretch reads CDKCGLPIKIYGRMIPCKHVFCYDCALMHEKKADKLCPGTL. Residues 157 to 215 form an HYB domain region; sequence CNDPVQRIEQCARGSLFMCSIVQGCKRTYLSQRDLQAHINHRHMRASKPTARPQPEPIH. The C2H2-type zinc finger occupies 173-199; that stretch reads FMCSIVQGCKRTYLSQRDLQAHINHRH. Residues 304–314 show a composition bias toward polar residues; sequence VPIQDDSNSGA. A disordered region spans residues 304 to 496; that stretch reads VPIQDDSNSG…DQARYRPYYQ (193 aa). 3 stretches are compositionally biased toward pro residues: residues 350 to 360, 380 to 397, and 407 to 430; these read APPPPPPPPIS, GPPP…PPPG, and MNHP…PPHH. Residues 434–449 show a composition bias toward polar residues; the sequence is SSMPQFNEDQGTLSPP. A compositionally biased stretch (pro residues) spans 464–483; it reads PRGPPPRMQGPPSQAPMPGP.

This sequence belongs to the Hakai family. Homodimer. Interacts with tyrosine-phosphorylated SRC substrates. Component of the WMM complex, a N6-methyltransferase complex composed of a catalytic subcomplex, named MAC, and of an associated subcomplex, named MACOM. Component of the MACOM subcomplex.

Its subcellular location is the nucleus speckle. The protein resides in the nucleus. It is found in the nucleoplasm. It catalyses the reaction S-ubiquitinyl-[E2 ubiquitin-conjugating enzyme]-L-cysteine + [acceptor protein]-L-lysine = [E2 ubiquitin-conjugating enzyme]-L-cysteine + N(6)-ubiquitinyl-[acceptor protein]-L-lysine.. It functions in the pathway protein modification; protein ubiquitination. Functionally, E3 ubiquitin-protein ligase that mediates ubiquitination of several tyrosine-phosphorylated Src substrates. Associated component of the WMM complex, a complex that mediates N6-methyladenosine (m6A) methylation of RNAs, a modification that plays a role in the efficiency of mRNA splicing and RNA processing. The protein is E3 ubiquitin-protein ligase Hakai of Xenopus laevis (African clawed frog).